Here is a 103-residue protein sequence, read N- to C-terminus: Co-chaperonin GroES (103 aa).

The protein belongs to the GroES chaperonin family. As to quaternary structure, heptamer of 7 subunits arranged in a ring. Interacts with the chaperonin GroEL.

Its subcellular location is the cytoplasm. In terms of biological role, together with the chaperonin GroEL, plays an essential role in assisting protein folding. The GroEL-GroES system forms a nano-cage that allows encapsulation of the non-native substrate proteins and provides a physical environment optimized to promote and accelerate protein folding. GroES binds to the apical surface of the GroEL ring, thereby capping the opening of the GroEL channel. The polypeptide is Co-chaperonin GroES (Synechococcus sp. (strain WH7803)).